Consider the following 297-residue polypeptide: Large ribosomal subunit protein uL18 (297 aa).

It belongs to the universal ribosomal protein uL18 family. In terms of assembly, component of the large ribosomal subunit (LSU).

Its subcellular location is the cytoplasm. It is found in the nucleus. Component of the ribosome, a large ribonucleoprotein complex responsible for the synthesis of proteins in the cell. The small ribosomal subunit (SSU) binds messenger RNAs (mRNAs) and translates the encoded message by selecting cognate aminoacyl-transfer RNA (tRNA) molecules. The large subunit (LSU) contains the ribosomal catalytic site termed the peptidyl transferase center (PTC), which catalyzes the formation of peptide bonds, thereby polymerizing the amino acids delivered by tRNAs into a polypeptide chain. The nascent polypeptides leave the ribosome through a tunnel in the LSU and interact with protein factors that function in enzymatic processing, targeting, and the membrane insertion of nascent chains at the exit of the ribosomal tunnel. This chain is Large ribosomal subunit protein uL18 (RpL5), found in Lysiphlebus testaceipes (Greenbugs aphid parastoid).